Here is a 206-residue protein sequence, read N- to C-terminus: MKTTHTSLPFAGHTLHFVEFDPANFCEQDLLWLPHYAQLQHAGRKRKTEHLAGRIAAVYALREYGYKCVPAIGELRQPVWPAEVYGSISHCGATALAVVSRQPIGVDIEEIFSAQTATELTDNIITPAEHERLADCGLAFSLALTLAFSAKESAFKASEIQTDAGFLDYQIISWNKQQVIIHRENEMFAVHWQIKEKIVITLCQHD.

3 residues coordinate Mg(2+): Asp-107, Glu-109, and Glu-152.

Belongs to the P-Pant transferase superfamily. EntD family. EntB, EntD, EntE, and EntF form a multienzyme complex called enterobactin synthase. It depends on Mg(2+) as a cofactor.

The protein resides in the membrane. The enzyme catalyses apo-[aryl-carrier protein] + CoA = holo-[aryl-carrier protein] + adenosine 3',5'-bisphosphate + H(+). It carries out the reaction apo-[peptidyl-carrier protein] + CoA = holo-[peptidyl-carrier protein] + adenosine 3',5'-bisphosphate + H(+). Its pathway is siderophore biosynthesis; enterobactin biosynthesis. Involved in the biosynthesis of the siderophore enterobactin (enterochelin), which is a macrocyclic trimeric lactone of N-(2,3-dihydroxybenzoyl)-serine. The serine trilactone serves as a scaffolding for the three catechol functionalities that provide hexadentate coordination for the tightly ligated iron(2+) atoms. Plays an essential role in the assembly of the enterobactin by catalyzing the transfer of the 4'-phosphopantetheine (Ppant) moiety from coenzyme A to the apo-domains of both EntB (ArCP domain) and EntF (PCP domain) to yield their holo-forms which make them competent for the activation of 2,3-dihydroxybenzoate (DHB) and L-serine, respectively. The sequence is that of Enterobactin synthase component D from Escherichia coli O157:H7.